Here is a 1940-residue protein sequence, read N- to C-terminus: Myosin-1B (1940 aa).

Residues 33 to 82 (DAKSSVFVVHAKESYVKSTIQSKESGKVTVKTEGGETLTVKEDQIFSMNP) enclose the Myosin N-terminal SH3-like domain. The region spanning 86-783 (DKIEDMAMMT…LLGLLEEMRD (698 aa)) is the Myosin motor domain. Lysine 130 bears the N6,N6,N6-trimethyllysine mark. Position 179-186 (179-186 (GESGAGKT)) interacts with ATP. Actin-binding regions lie at residues 660 to 682 (LNKLMSNLRSTHPHFVRCLIPNE) and 762 to 776 (KFGHTKVFFKAGLLG). Residues 786 to 815 (LAQLITRTQARCRGFLMRVEFKKMMERRES) form the IQ domain. The stretch at 844 to 1940 (LLKSAESEKE…EIGKKAESEE (1097 aa)) forms a coiled coil. A disordered region spans residues 1912–1940 (EERADIAESQVNKLRAKSREIGKKAESEE). Residues 1928–1940 (KSREIGKKAESEE) show a composition bias toward basic and acidic residues.

The protein belongs to the TRAFAC class myosin-kinesin ATPase superfamily. Myosin family. In terms of assembly, muscle myosin is a hexameric protein that consists of 2 heavy chain subunits (MHC), 2 alkali light chain subunits (MLC) and 2 regulatory light chain subunits (MLC-2).

Its subcellular location is the cytoplasm. It localises to the myofibril. Functionally, muscle contraction. The chain is Myosin-1B (MYH1B) from Gallus gallus (Chicken).